A 362-amino-acid chain; its full sequence is Cobalt-precorrin-5B C(1)-methyltransferase (362 aa).

The protein belongs to the CbiD family.

The enzyme catalyses Co-precorrin-5B + S-adenosyl-L-methionine = Co-precorrin-6A + S-adenosyl-L-homocysteine. The protein operates within cofactor biosynthesis; adenosylcobalamin biosynthesis; cob(II)yrinate a,c-diamide from sirohydrochlorin (anaerobic route): step 6/10. Functionally, catalyzes the methylation of C-1 in cobalt-precorrin-5B to form cobalt-precorrin-6A. The polypeptide is Cobalt-precorrin-5B C(1)-methyltransferase (Burkholderia lata (strain ATCC 17760 / DSM 23089 / LMG 22485 / NCIMB 9086 / R18194 / 383)).